The chain runs to 478 residues: ATP synthase subunit beta (478 aa).

Position 160-167 (160-167 (GGAGVGKT)) interacts with ATP.

This sequence belongs to the ATPase alpha/beta chains family. As to quaternary structure, F-type ATPases have 2 components, CF(1) - the catalytic core - and CF(0) - the membrane proton channel. CF(1) has five subunits: alpha(3), beta(3), gamma(1), delta(1), epsilon(1). CF(0) has three main subunits: a(1), b(2) and c(9-12). The alpha and beta chains form an alternating ring which encloses part of the gamma chain. CF(1) is attached to CF(0) by a central stalk formed by the gamma and epsilon chains, while a peripheral stalk is formed by the delta and b chains.

The protein resides in the cell inner membrane. It catalyses the reaction ATP + H2O + 4 H(+)(in) = ADP + phosphate + 5 H(+)(out). Produces ATP from ADP in the presence of a proton gradient across the membrane. The catalytic sites are hosted primarily by the beta subunits. The sequence is that of ATP synthase subunit beta from Orientia tsutsugamushi (strain Boryong) (Rickettsia tsutsugamushi).